A 697-amino-acid chain; its full sequence is Polyribonucleotide nucleotidyltransferase (697 aa).

Residues Asp-487 and Asp-493 each contribute to the Mg(2+) site. Residues 554 to 613 (PRIETIQIKPSKIAVVIGPGGKQIRAIIEQTGVQIDIDDTGLVNIAAIDLVSIEKAKAII) enclose the KH domain. An S1 motif domain is found at 623-691 (GRIYSGKAIS…ERGQIKLSRK (69 aa)).

This sequence belongs to the polyribonucleotide nucleotidyltransferase family. Mg(2+) serves as cofactor.

The protein localises to the cytoplasm. The catalysed reaction is RNA(n+1) + phosphate = RNA(n) + a ribonucleoside 5'-diphosphate. Functionally, involved in mRNA degradation. Catalyzes the phosphorolysis of single-stranded polyribonucleotides processively in the 3'- to 5'-direction. The sequence is that of Polyribonucleotide nucleotidyltransferase from Protochlamydia amoebophila (strain UWE25).